The following is a 271-amino-acid chain: Elongation factor Ts (271 aa).

Residues 76–79 are involved in Mg(2+) ion dislocation from EF-Tu; the sequence is TDFV.

This sequence belongs to the EF-Ts family.

It localises to the cytoplasm. In terms of biological role, associates with the EF-Tu.GDP complex and induces the exchange of GDP to GTP. It remains bound to the aminoacyl-tRNA.EF-Tu.GTP complex up to the GTP hydrolysis stage on the ribosome. The chain is Elongation factor Ts from Mycobacterium bovis (strain BCG / Pasteur 1173P2).